We begin with the raw amino-acid sequence, 209 residues long: C-type lectin domain family 6 member A (209 aa).

The Cytoplasmic segment spans residues 1–20; sequence MMQEQQPQSTEKRGWLSLRL. The helical; Signal-anchor for type II membrane protein transmembrane segment at 21 to 41 threads the bilayer; the sequence is WSVAGISIALLSACFIVSCVV. Residues 42–209 lie on the Extracellular side of the membrane; sequence TYHFTYGETG…SICEMNKIYL (168 aa). Disulfide bonds link Cys66/Cys78, Cys79/Cys90, Cys107/Cys202, and Cys176/Cys194. A C-type lectin domain is found at 86-203; the sequence is FGSSCYFISS…CETRRNSICE (118 aa). Residues Val116, Asn118, and Glu122 each contribute to the Ca(2+) site. Residue Asn131 is glycosylated (N-linked (GlcNAc...) asparagine). Positions 168, 170, and 174 each coordinate Ca(2+). Alpha-D-mannopyranose is bound by residues 168–170, Glu174, Trp182, 190–191, and Arg198; these read EPN and ND. Asn170 is a glycosylation site (N-linked (GlcNAc...) asparagine). 2 residues coordinate Ca(2+): Asn190 and Asp191. A Ca(2+)-binding site is contributed by Glu203.

As to quaternary structure, associated with FCER1G. Heterodimer with CLEC4D; this heterodimer forms a pattern recognition receptor (PRR) against fungal infection. As to expression, expressed in lung, spleen, lymph node, leukocytes, bone marrow, tonsils and dendritic cells. Strongly expressed in purified monocytes and weakly in B-cells. In peripheral blood cells, preferentially expressed in plasmacytoids rather than myeloids.

The protein localises to the cell membrane. Calcium-dependent lectin that acts as a pattern recognition receptor (PRR) of the innate immune system: specifically recognizes and binds alpha-mannans on C.albicans hypheas. Binding of C.albicans alpha-mannans to this receptor complex leads to phosphorylation of the immunoreceptor tyrosine-based activation motif (ITAM) of FCER1G, triggering activation of SYK, CARD9 and NF-kappa-B, consequently driving maturation of antigen-presenting cells and shaping antigen-specific priming of T-cells toward effector T-helper 1 and T-helper 17 cell subtypes. Recognizes also, in a mannose-dependent manner, allergens from house dust mite and fungi, by promoting cysteinyl leukotriene production. Recognizes soluble elements from the eggs of Shistosoma mansoni altering adaptive immune responses. In Homo sapiens (Human), this protein is C-type lectin domain family 6 member A.